A 179-amino-acid chain; its full sequence is Natural killer cells antigen CD94 (179 aa).

The Cytoplasmic portion of the chain corresponds to 1–10 (MAVFKTTLWW). Residues 11-31 (LISGTLGIICLSLTATLGILL) traverse the membrane as a helical; Signal-anchor for type II membrane protein segment. Residues 32-179 (KNSFTKLSIE…NRYICKQQLI (148 aa)) are Extracellular-facing. Disulfide bonds link Cys-58–Cys-70 and Cys-61–Cys-72. The region spanning 68 to 175 (YRCNCYFISS…CEDKNRYICK (108 aa)) is the C-type lectin domain. Asn-83 and Asn-132 each carry an N-linked (GlcNAc...) asparagine glycan. Intrachain disulfides connect Cys-89-Cys-174 and Cys-152-Cys-166.

Can form disulfide-bonded heterodimer with NKG2 family members KLRC1 and KLRC2. KLRD1-KLRC1 heterodimer interacts with peptide-bound MHC-E-B2M heterotrimeric complex. KLRD1 plays a prominent role in directly interacting with MHC-E. KLRD1-KLRC1 interacts with much higher affinity with peptide-bound MHC-E-B2M than KLRD1-KLRC2. Interacts with the adapter protein TYROBP/DAP12; this interaction is required for cell surface expression and cell activation. Natural killer cells.

Its subcellular location is the cell membrane. Functionally, immune receptor involved in self-nonself discrimination. In complex with KLRC1 or KLRC2 on cytotoxic and regulatory lymphocyte subsets, recognizes non-classical major histocompatibility (MHC) class Ib molecule MHC-E loaded with self-peptides derived from the signal sequence of classical MHC class Ia and non-classical MHC class Ib molecules. Enables cytotoxic cells to monitor the expression of MHC class I molecules in healthy cells and to tolerate self. Primarily functions as a ligand binding subunit as it lacks the capacity to signal. Its function is as follows. KLRD1-KLRC1 acts as an immune inhibitory receptor. Key inhibitory receptor on natural killer (NK) cells that regulates their activation and effector functions. Dominantly counteracts T cell receptor signaling on a subset of memory/effector CD8-positive T cells as part of an antigen-driven response to avoid autoimmunity. On intraepithelial CD8-positive gamma-delta regulatory T cells triggers TGFB1 secretion, which in turn limits the cytotoxic programming of intraepithelial CD8-positive alpha-beta T cells, distinguishing harmless from pathogenic antigens. In MHC-E-rich tumor microenvironment, acts as an immune inhibitory checkpoint and may contribute to progressive loss of effector functions of NK cells and tumor-specific T cells, a state known as cell exhaustion. Upon MHC-E-peptide binding, transmits intracellular signals through KLRC1 immunoreceptor tyrosine-based inhibition motifs (ITIMs) by recruiting INPP5D/SHIP-1 and INPPL1/SHIP-2 tyrosine phosphatases to ITIMs, and ultimately opposing signals transmitted by activating receptors through dephosphorylation of proximal signaling molecules. In terms of biological role, KLRD1-KLRC2 acts as an immune activating receptor. On cytotoxic lymphocyte subsets recognizes MHC-E loaded with signal sequence-derived peptides from non-classical MHC class Ib MHC-G molecules, likely playing a role in the generation and effector functions of adaptive NK cells and in maternal-fetal tolerance during pregnancy. Regulates the effector functions of terminally differentiated cytotoxic lymphocyte subsets, and in particular may play a role in adaptive NK cell response to viral infection. Upon MHC-E-peptide binding, transmits intracellular signals via the adapter protein TYROBP/DAP12, triggering the phosphorylation of proximal signaling molecules and cell activation. This chain is Natural killer cells antigen CD94 (KLRD1), found in Pongo pygmaeus (Bornean orangutan).